A 354-amino-acid chain; its full sequence is tRNA-specific 2-thiouridylase MnmA (354 aa).

Residues 6-13 and leucine 33 each bind ATP; that span reads LLSGGVDS. The Nucleophile role is filled by cysteine 100. A disulfide bridge links cysteine 100 with cysteine 195. Residue glycine 123 coordinates ATP. The interval 145 to 147 is interaction with tRNA; the sequence is KDQ. Cysteine 195 serves as the catalytic Cysteine persulfide intermediate.

This sequence belongs to the MnmA/TRMU family.

The protein localises to the cytoplasm. It carries out the reaction S-sulfanyl-L-cysteinyl-[protein] + uridine(34) in tRNA + AH2 + ATP = 2-thiouridine(34) in tRNA + L-cysteinyl-[protein] + A + AMP + diphosphate + H(+). Its function is as follows. Catalyzes the 2-thiolation of uridine at the wobble position (U34) of tRNA, leading to the formation of s(2)U34. The polypeptide is tRNA-specific 2-thiouridylase MnmA (Borrelia turicatae (strain 91E135)).